Consider the following 114-residue polypeptide: T cell receptor beta variable 6-4 (114 aa).

A signal peptide spans 1 to 21 (MSIRLLCCVAFSLLWAGPVTA). The Ig-like domain occupies 22 to 114 (GITQAPTSQI…TSVYFCASSD (93 aa)). A disulfide bond links Cys-42 and Cys-110.

In terms of assembly, alpha-beta TR is a heterodimer composed of an alpha and beta chain; disulfide-linked. The alpha-beta TR is associated with the transmembrane signaling CD3 coreceptor proteins to form the TR-CD3 (TcR or TCR). The assembly of alpha-beta TR heterodimers with CD3 occurs in the endoplasmic reticulum where a single alpha-beta TR heterodimer associates with one CD3D-CD3E heterodimer, one CD3G-CD3E heterodimer and one CD247 homodimer forming a stable octameric structure. CD3D-CD3E and CD3G-CD3E heterodimers preferentially associate with TR alpha and TR beta chains, respectively. The association of the CD247 homodimer is the last step of TcR assembly in the endoplasmic reticulum and is required for transport to the cell surface.

It is found in the cell membrane. Its function is as follows. V region of the variable domain of T cell receptor (TR) beta chain that participates in the antigen recognition. Alpha-beta T cell receptors are antigen specific receptors which are essential to the immune response and are present on the cell surface of T lymphocytes. Recognize peptide-major histocompatibility (MH) (pMH) complexes that are displayed by antigen presenting cells (APC), a prerequisite for efficient T cell adaptive immunity against pathogens. Binding of alpha-beta TR to pMH complex initiates TR-CD3 clustering on the cell surface and intracellular activation of LCK that phosphorylates the ITAM motifs of CD3G, CD3D, CD3E and CD247 enabling the recruitment of ZAP70. In turn ZAP70 phosphorylates LAT, which recruits numerous signaling molecules to form the LAT signalosome. The LAT signalosome propagates signal branching to three major signaling pathways, the calcium, the mitogen-activated protein kinase (MAPK) kinase and the nuclear factor NF-kappa-B (NF-kB) pathways, leading to the mobilization of transcription factors that are critical for gene expression and essential for T cell growth and differentiation. The T cell repertoire is generated in the thymus, by V-(D)-J rearrangement. This repertoire is then shaped by intrathymic selection events to generate a peripheral T cell pool of self-MH restricted, non-autoaggressive T cells. Post-thymic interaction of alpha-beta TR with the pMH complexes shapes TR structural and functional avidity. This is T cell receptor beta variable 6-4 from Homo sapiens (Human).